A 340-amino-acid polypeptide reads, in one-letter code: 4-hydroxy-3-methylbut-2-enyl diphosphate reductase (340 aa).

C19 is a binding site for [4Fe-4S] cluster. Positions 50 and 90 each coordinate (2E)-4-hydroxy-3-methylbut-2-enyl diphosphate. Residues H50 and H90 each contribute to the dimethylallyl diphosphate site. The isopentenyl diphosphate site is built by H50 and H90. C112 is a binding site for [4Fe-4S] cluster. H141 is a binding site for (2E)-4-hydroxy-3-methylbut-2-enyl diphosphate. H141 serves as a coordination point for dimethylallyl diphosphate. H141 contacts isopentenyl diphosphate. E143 acts as the Proton donor in catalysis. T190 provides a ligand contact to (2E)-4-hydroxy-3-methylbut-2-enyl diphosphate. C220 contributes to the [4Fe-4S] cluster binding site. Positions 248, 249, 250, and 292 each coordinate (2E)-4-hydroxy-3-methylbut-2-enyl diphosphate. Residues S248, S249, N250, and S292 each coordinate dimethylallyl diphosphate. Isopentenyl diphosphate-binding residues include S248, S249, N250, and S292.

It belongs to the IspH family. [4Fe-4S] cluster serves as cofactor.

It carries out the reaction isopentenyl diphosphate + 2 oxidized [2Fe-2S]-[ferredoxin] + H2O = (2E)-4-hydroxy-3-methylbut-2-enyl diphosphate + 2 reduced [2Fe-2S]-[ferredoxin] + 2 H(+). The enzyme catalyses dimethylallyl diphosphate + 2 oxidized [2Fe-2S]-[ferredoxin] + H2O = (2E)-4-hydroxy-3-methylbut-2-enyl diphosphate + 2 reduced [2Fe-2S]-[ferredoxin] + 2 H(+). Its pathway is isoprenoid biosynthesis; dimethylallyl diphosphate biosynthesis; dimethylallyl diphosphate from (2E)-4-hydroxy-3-methylbutenyl diphosphate: step 1/1. The protein operates within isoprenoid biosynthesis; isopentenyl diphosphate biosynthesis via DXP pathway; isopentenyl diphosphate from 1-deoxy-D-xylulose 5-phosphate: step 6/6. Its function is as follows. Catalyzes the conversion of 1-hydroxy-2-methyl-2-(E)-butenyl 4-diphosphate (HMBPP) into a mixture of isopentenyl diphosphate (IPP) and dimethylallyl diphosphate (DMAPP). Acts in the terminal step of the DOXP/MEP pathway for isoprenoid precursor biosynthesis. The sequence is that of 4-hydroxy-3-methylbut-2-enyl diphosphate reductase from Thermus thermophilus (strain ATCC BAA-163 / DSM 7039 / HB27).